A 266-amino-acid polypeptide reads, in one-letter code: Undecaprenyl-diphosphatase 1 (266 aa).

8 consecutive transmembrane segments (helical) span residues 1 to 21 (MDTFQVIILALIQGLTEFLPI), 39 to 59 (QGLSFDVAVNTGSLFAVVIYF), 87 to 107 (WWIILATLPAVFFGFMAKDFI), 114 to 134 (TGVIAVTTVVFGLLLWWADKM), 149 to 169 (ALLIGFAQALALIPGTSRSGA), 183 to 203 (AAARFSFLMSVPVSLGAAILV), 218 to 238 (ALTLGTVISFAAAYLCIHYFL), and 246 to 266 (MTPFVIYRLALGAVLCGFIFL).

This sequence belongs to the UppP family.

Its subcellular location is the cell inner membrane. It catalyses the reaction di-trans,octa-cis-undecaprenyl diphosphate + H2O = di-trans,octa-cis-undecaprenyl phosphate + phosphate + H(+). Catalyzes the dephosphorylation of undecaprenyl diphosphate (UPP). Confers resistance to bacitracin. In Shewanella oneidensis (strain ATCC 700550 / JCM 31522 / CIP 106686 / LMG 19005 / NCIMB 14063 / MR-1), this protein is Undecaprenyl-diphosphatase 1.